A 480-amino-acid chain; its full sequence is Cysteine--tRNA ligase (480 aa).

Cysteine 29 contacts Zn(2+). The short motif at 31 to 41 (ITVYDYCHLGH) is the 'HIGH' region element. Zn(2+) is bound by residues cysteine 215, histidine 240, and glutamate 244. Positions 272–276 (KMSKS) match the 'KMSKS' region motif. ATP is bound at residue lysine 275.

The protein belongs to the class-I aminoacyl-tRNA synthetase family. In terms of assembly, monomer. Requires Zn(2+) as cofactor.

The protein localises to the cytoplasm. It carries out the reaction tRNA(Cys) + L-cysteine + ATP = L-cysteinyl-tRNA(Cys) + AMP + diphosphate. This Microcystis aeruginosa (strain NIES-843 / IAM M-2473) protein is Cysteine--tRNA ligase.